Here is a 257-residue protein sequence, read N- to C-terminus: 1-(5-phosphoribosyl)-5-[(5-phosphoribosylamino)methylideneamino] imidazole-4-carboxamide isomerase (257 aa).

Residue D8 is the Proton acceptor of the active site. D131 serves as the catalytic Proton donor.

It belongs to the HisA/HisF family.

Its subcellular location is the cytoplasm. The catalysed reaction is 1-(5-phospho-beta-D-ribosyl)-5-[(5-phospho-beta-D-ribosylamino)methylideneamino]imidazole-4-carboxamide = 5-[(5-phospho-1-deoxy-D-ribulos-1-ylimino)methylamino]-1-(5-phospho-beta-D-ribosyl)imidazole-4-carboxamide. The protein operates within amino-acid biosynthesis; L-histidine biosynthesis; L-histidine from 5-phospho-alpha-D-ribose 1-diphosphate: step 4/9. The protein is 1-(5-phosphoribosyl)-5-[(5-phosphoribosylamino)methylideneamino] imidazole-4-carboxamide isomerase of Nitrosospira multiformis (strain ATCC 25196 / NCIMB 11849 / C 71).